We begin with the raw amino-acid sequence, 256 residues long: uncharacterized protein (256 aa).

The first 22 residues, 1 to 22 (MGYLKRIGMCISLLIVIIFVTS), serve as a signal peptide directing secretion. Cysteine 23 carries the N-palmitoyl cysteine lipid modification. Cysteine 23 carries the S-diacylglycerol cysteine lipid modification.

This sequence belongs to the staphylococcal tandem lipoprotein family.

The protein localises to the cell membrane. This is an uncharacterized protein from Staphylococcus aureus (strain MRSA252).